The sequence spans 480 residues: Cysteine--tRNA ligase (480 aa).

Position 27 (C27) interacts with Zn(2+). The short motif at 29–39 is the 'HIGH' region element; it reads PTVYNYAHIGN. Residues C221, H246, and E250 each contribute to the Zn(2+) site. A 'KMSKS' region motif is present at residues 278 to 282; that stretch reads KMSKS. K281 lines the ATP pocket.

This sequence belongs to the class-I aminoacyl-tRNA synthetase family. As to quaternary structure, monomer. Zn(2+) is required as a cofactor.

It is found in the cytoplasm. It catalyses the reaction tRNA(Cys) + L-cysteine + ATP = L-cysteinyl-tRNA(Cys) + AMP + diphosphate. In Borreliella burgdorferi (strain ZS7) (Borrelia burgdorferi), this protein is Cysteine--tRNA ligase.